Reading from the N-terminus, the 294-residue chain is Bifunctional protein FolD (294 aa).

NADP(+)-binding positions include 166–168 (GRS), Ser-195, and Ile-236.

Belongs to the tetrahydrofolate dehydrogenase/cyclohydrolase family. Homodimer.

The catalysed reaction is (6R)-5,10-methylene-5,6,7,8-tetrahydrofolate + NADP(+) = (6R)-5,10-methenyltetrahydrofolate + NADPH. It carries out the reaction (6R)-5,10-methenyltetrahydrofolate + H2O = (6R)-10-formyltetrahydrofolate + H(+). The protein operates within one-carbon metabolism; tetrahydrofolate interconversion. Its function is as follows. Catalyzes the oxidation of 5,10-methylenetetrahydrofolate to 5,10-methenyltetrahydrofolate and then the hydrolysis of 5,10-methenyltetrahydrofolate to 10-formyltetrahydrofolate. This Chloroherpeton thalassium (strain ATCC 35110 / GB-78) protein is Bifunctional protein FolD.